The sequence spans 342 residues: Phenylalanine--tRNA ligase alpha subunit (342 aa).

Glu-260 is a Mg(2+) binding site.

It belongs to the class-II aminoacyl-tRNA synthetase family. Phe-tRNA synthetase alpha subunit type 1 subfamily. Tetramer of two alpha and two beta subunits. Mg(2+) is required as a cofactor.

Its subcellular location is the cytoplasm. It carries out the reaction tRNA(Phe) + L-phenylalanine + ATP = L-phenylalanyl-tRNA(Phe) + AMP + diphosphate + H(+). This is Phenylalanine--tRNA ligase alpha subunit from Nocardia farcinica (strain IFM 10152).